The sequence spans 273 residues: Undecaprenyl-diphosphatase (273 aa).

7 helical membrane-spanning segments follow: residues serine 6–serine 26, alanine 45–tryptophan 65, leucine 90–histidine 110, leucine 116–alanine 136, tyrosine 190–leucine 210, glycine 222–isoleucine 242, and isoleucine 252–phenylalanine 272.

The protein belongs to the UppP family.

It is found in the cell inner membrane. It catalyses the reaction di-trans,octa-cis-undecaprenyl diphosphate + H2O = di-trans,octa-cis-undecaprenyl phosphate + phosphate + H(+). Catalyzes the dephosphorylation of undecaprenyl diphosphate (UPP). Confers resistance to bacitracin. This Escherichia fergusonii (strain ATCC 35469 / DSM 13698 / CCUG 18766 / IAM 14443 / JCM 21226 / LMG 7866 / NBRC 102419 / NCTC 12128 / CDC 0568-73) protein is Undecaprenyl-diphosphatase.